The primary structure comprises 137 residues: Large ribosomal subunit protein uL16 (137 aa).

It belongs to the universal ribosomal protein uL16 family. Part of the 50S ribosomal subunit.

Functionally, binds 23S rRNA and is also seen to make contacts with the A and possibly P site tRNAs. The chain is Large ribosomal subunit protein uL16 from Thioalkalivibrio sulfidiphilus (strain HL-EbGR7).